The following is a 122-amino-acid chain: Urease subunit beta (122 aa).

The tract at residues 92 to 122 is disordered; sequence GLRPEYAGELDGRGHEPTAPNYGEKGQGHFE.

This sequence belongs to the urease beta subunit family. As to quaternary structure, heterotrimer of UreA (gamma), UreB (beta) and UreC (alpha) subunits. Three heterotrimers associate to form the active enzyme.

The protein resides in the cytoplasm. It catalyses the reaction urea + 2 H2O + H(+) = hydrogencarbonate + 2 NH4(+). Its pathway is nitrogen metabolism; urea degradation; CO(2) and NH(3) from urea (urease route): step 1/1. This Saccharopolyspora erythraea (strain ATCC 11635 / DSM 40517 / JCM 4748 / NBRC 13426 / NCIMB 8594 / NRRL 2338) protein is Urease subunit beta.